The primary structure comprises 287 residues: Putative sugar uptake protein LJ_0170 (287 aa).

10 helical membrane-spanning segments follow: residues 4–23 (VYLF…IASV), 28–50 (VYNQ…MAIM), 56–78 (WSLF…GQYI), 91–108 (ISTG…VLAF), 118–137 (LYGF…TSFT), 150–169 (VSTI…SSSI), 179–198 (SIFF…YTLV), 211–230 (VQSG…YILS), 240–259 (FVIS…IFLH), and 266–285 (GLIF…MLTT).

Belongs to the GRP transporter (TC 2.A.7.5) family.

The protein resides in the cell membrane. In Lactobacillus johnsonii (strain CNCM I-12250 / La1 / NCC 533), this protein is Putative sugar uptake protein LJ_0170.